The primary structure comprises 174 residues: Gamma-crystallin D (174 aa).

Beta/gamma crystallin 'Greek key' domains follow at residues 2-40 (GKITFYEDRGFQGRHYECSTDHSNLQPYFSRCNSVRVDS) and 41-83 (GCWM…RLIP). The connecting peptide stretch occupies residues 84–87 (HAGS). Beta/gamma crystallin 'Greek key' domains are found at residues 88–128 (HRIR…NVLE) and 129–171 (GCWV…RRVM).

This sequence belongs to the beta/gamma-crystallin family. As to expression, detected in the superior olivary complex of the auditory hindbrain.

Its function is as follows. Crystallins are the dominant structural components of the vertebrate eye lens. The sequence is that of Gamma-crystallin D (Crygd) from Mus musculus (Mouse).